Consider the following 277-residue polypeptide: Diaminopimelate epimerase (277 aa).

Residues Asn-13, Gln-46, and Asn-66 each contribute to the substrate site. The active-site Proton donor is Cys-75. Substrate is bound by residues 76–77 (GN), Asn-160, Asn-193, and 211–212 (ER). Cys-220 functions as the Proton acceptor in the catalytic mechanism. 221-222 (GT) provides a ligand contact to substrate.

Belongs to the diaminopimelate epimerase family. Homodimer.

The protein resides in the cytoplasm. The catalysed reaction is (2S,6S)-2,6-diaminopimelate = meso-2,6-diaminopimelate. The protein operates within amino-acid biosynthesis; L-lysine biosynthesis via DAP pathway; DL-2,6-diaminopimelate from LL-2,6-diaminopimelate: step 1/1. Catalyzes the stereoinversion of LL-2,6-diaminopimelate (L,L-DAP) to meso-diaminopimelate (meso-DAP), a precursor of L-lysine and an essential component of the bacterial peptidoglycan. This Saccharophagus degradans (strain 2-40 / ATCC 43961 / DSM 17024) protein is Diaminopimelate epimerase.